We begin with the raw amino-acid sequence, 105 residues long: Large ribosomal subunit protein bL21 (105 aa).

Belongs to the bacterial ribosomal protein bL21 family. In terms of assembly, part of the 50S ribosomal subunit. Contacts protein L20.

In terms of biological role, this protein binds to 23S rRNA in the presence of protein L20. This is Large ribosomal subunit protein bL21 from Parafrankia sp. (strain EAN1pec).